The sequence spans 262 residues: Tetrahydromethanopterin S-methyltransferase subunit C (262 aa).

Helical transmembrane passes span 35 to 57 (FVPS…AGAN), 70 to 92 (GVPS…GVLI), 97 to 119 (GLPV…FIVG), 140 to 162 (LSLM…FSAD), 172 to 194 (GVIA…ACIG), and 214 to 236 (WLIF…FWLY).

This sequence belongs to the MtrC family. In terms of assembly, the complex is composed of 8 subunits; MtrA, MtrB, MtrC, MtrD, MtrE, MtrF, MtrG and MtrH.

The protein localises to the cell membrane. The enzyme catalyses 5-methyl-5,6,7,8-tetrahydromethanopterin + coenzyme M + 2 Na(+)(in) = 5,6,7,8-tetrahydromethanopterin + methyl-coenzyme M + 2 Na(+)(out). It participates in one-carbon metabolism; methanogenesis from CO(2); methyl-coenzyme M from 5,10-methylene-5,6,7,8-tetrahydromethanopterin: step 2/2. Part of a complex that catalyzes the formation of methyl-coenzyme M and tetrahydromethanopterin from coenzyme M and methyl-tetrahydromethanopterin. This is an energy-conserving, sodium-ion translocating step. The chain is Tetrahydromethanopterin S-methyltransferase subunit C from Methanococcus maripaludis (strain DSM 14266 / JCM 13030 / NBRC 101832 / S2 / LL).